The following is a 611-amino-acid chain: ATP-dependent zinc metalloprotease FtsH 1 (611 aa).

Over Met-1–Lys-6 the chain is Cytoplasmic. Residues Ile-7–Leu-27 form a helical membrane-spanning segment. Topologically, residues Tyr-28–Trp-107 are extracellular. A helical membrane pass occupies residues Trp-108–Phe-128. Phe-124–Gln-131 is a binding site for ATP. The Cytoplasmic segment spans residues Met-129–Ala-611. His-423 contacts Zn(2+). Residue Glu-424 is part of the active site. His-427 and Asp-499 together coordinate Zn(2+).

In the central section; belongs to the AAA ATPase family. This sequence in the C-terminal section; belongs to the peptidase M41 family. In terms of assembly, homohexamer. It depends on Zn(2+) as a cofactor.

It is found in the cell membrane. Acts as a processive, ATP-dependent zinc metallopeptidase for both cytoplasmic and membrane proteins. Plays a role in the quality control of integral membrane proteins. The protein is ATP-dependent zinc metalloprotease FtsH 1 of Thermoanaerobacter sp. (strain X514).